We begin with the raw amino-acid sequence, 463 residues long: Glutamate--tRNA ligase (463 aa).

The short motif at 10 to 20 is the 'HIGH' region element; it reads PSPTGHLHIGG. A 'KMSKS' region motif is present at residues 236 to 240; sequence KLSKR. Lys-239 is a binding site for ATP.

This sequence belongs to the class-I aminoacyl-tRNA synthetase family. Glutamate--tRNA ligase type 1 subfamily. As to quaternary structure, monomer.

Its subcellular location is the cytoplasm. The enzyme catalyses tRNA(Glu) + L-glutamate + ATP = L-glutamyl-tRNA(Glu) + AMP + diphosphate. Its function is as follows. Catalyzes the attachment of glutamate to tRNA(Glu) in a two-step reaction: glutamate is first activated by ATP to form Glu-AMP and then transferred to the acceptor end of tRNA(Glu). This chain is Glutamate--tRNA ligase, found in Nitratidesulfovibrio vulgaris (strain DP4) (Desulfovibrio vulgaris).